The chain runs to 243 residues: 7-cyano-7-deazaguanine synthase (243 aa).

9–19 (FSGGQDSTTCL) provides a ligand contact to ATP. Cys-205, Cys-220, Cys-223, and Cys-226 together coordinate Zn(2+).

The protein belongs to the QueC family. Zn(2+) is required as a cofactor.

It carries out the reaction 7-carboxy-7-deazaguanine + NH4(+) + ATP = 7-cyano-7-deazaguanine + ADP + phosphate + H2O + H(+). It functions in the pathway purine metabolism; 7-cyano-7-deazaguanine biosynthesis. Functionally, catalyzes the ATP-dependent conversion of 7-carboxy-7-deazaguanine (CDG) to 7-cyano-7-deazaguanine (preQ(0)). In Albidiferax ferrireducens (strain ATCC BAA-621 / DSM 15236 / T118) (Rhodoferax ferrireducens), this protein is 7-cyano-7-deazaguanine synthase.